The primary structure comprises 307 residues: Leucine-rich repeat-containing protein 59 (307 aa).

Over 1 to 247 the chain is Cytoplasmic; it reads MARANGRSQN…LAQRQSRLRK (247 aa). 5 LRR repeats span residues 10-31, 40-61, 63-84, 86-107, and 109-131; these read NLRD…SEVP, KATA…FCNL, HIVR…FGRL, NLQH…FAQL, and SLKW…AGDC. The stretch at 156–222 forms a coiled coil; that stretch reads EIELQRKLQL…LNSNKKAEEE (67 aa). The segment at 170 to 238 is disordered; sequence KKKLEAKQRV…RMATPKEKKL (69 aa). 2 stretches are compositionally biased toward basic and acidic residues: residues 174-187 and 194-238; these read EAKQ…EREM and QQKE…EKKL. The helical transmembrane segment at 248–268 threads the bilayer; sequence IACILLFGLLVVLLVVVACRF. Residues 269–307 lie on the Lumenal side of the membrane; sequence TDLKAINMCTSVNAIYKETLSALHSNPVLERFLQDPSSQ.

Interacts with SGO1.

It localises to the microsome membrane. Its subcellular location is the endoplasmic reticulum membrane. The protein localises to the nucleus envelope. Required for nuclear import of FGF1. The chain is Leucine-rich repeat-containing protein 59 (lrrc59) from Xenopus laevis (African clawed frog).